Consider the following 498-residue polypeptide: ATP synthase subunit beta, chloroplastic (498 aa).

172-179 is an ATP binding site; that stretch reads GGAGVGKT.

It belongs to the ATPase alpha/beta chains family. As to quaternary structure, F-type ATPases have 2 components, CF(1) - the catalytic core - and CF(0) - the membrane proton channel. CF(1) has five subunits: alpha(3), beta(3), gamma(1), delta(1), epsilon(1). CF(0) has four main subunits: a(1), b(1), b'(1) and c(9-12).

It localises to the plastid. It is found in the chloroplast thylakoid membrane. It carries out the reaction ATP + H2O + 4 H(+)(in) = ADP + phosphate + 5 H(+)(out). Produces ATP from ADP in the presence of a proton gradient across the membrane. The catalytic sites are hosted primarily by the beta subunits. In Vitis vinifera (Grape), this protein is ATP synthase subunit beta, chloroplastic.